A 216-amino-acid polypeptide reads, in one-letter code: Large ribosomal subunit protein uL1B (216 aa).

Serine 11 is modified (phosphoserine).

Belongs to the universal ribosomal protein uL1 family. Component of the large ribosomal subunit (LSU). Mature yeast ribosomes consist of a small (40S) and a large (60S) subunit. The 40S small subunit contains 1 molecule of ribosomal RNA (18S rRNA) and at least 33 different proteins. The large 60S subunit contains 3 rRNA molecules (25S, 5.8S and 5S rRNA) and at least 46 different proteins. uL1 forms part of the L1 stalk.

The protein localises to the cytoplasm. Functionally, component of the ribosome, a large ribonucleoprotein complex responsible for the synthesis of proteins in the cell. The small ribosomal subunit (SSU) binds messenger RNAs (mRNAs) and translates the encoded message by selecting cognate aminoacyl-transfer RNA (tRNA) molecules. The large subunit (LSU) contains the ribosomal catalytic site termed the peptidyl transferase center (PTC), which catalyzes the formation of peptide bonds, thereby polymerizing the amino acids delivered by tRNAs into a polypeptide chain. The nascent polypeptides leave the ribosome through a tunnel in the LSU and interact with protein factors that function in enzymatic processing, targeting, and the membrane insertion of nascent chains at the exit of the ribosomal tunnel. uL1 forms part of the L1 stalk, a mobile element that plays a role in evacuating the exit-site tRNA. The sequence is that of Large ribosomal subunit protein uL1B (rpl101) from Schizosaccharomyces pombe (strain 972 / ATCC 24843) (Fission yeast).